Consider the following 299-residue polypeptide: dTDP-4-dehydrorhamnose reductase (299 aa).

NADH contacts are provided by residues 10 to 12, Asp30, 39 to 40, and 63 to 65; these read GQV, DF, and AHT. 11–12 contacts NADPH; that stretch reads QV. NADPH is bound by residues 39–40, 63–65, and Tyr102; these read DF and AHT. 104–105 is a dTDP-beta-L-rhamnose binding site; that stretch reads TD. 2 residues coordinate NADH: Tyr128 and Lys132. 2 residues coordinate NADPH: Tyr128 and Lys132. Residue Tyr128 is the Proton donor/acceptor of the active site. Trp153 is a dTDP-beta-L-rhamnose binding site.

It belongs to the dTDP-4-dehydrorhamnose reductase family. As to quaternary structure, homodimer. The cofactor is Mg(2+).

The catalysed reaction is dTDP-beta-L-rhamnose + NADP(+) = dTDP-4-dehydro-beta-L-rhamnose + NADPH + H(+). The protein operates within carbohydrate biosynthesis; dTDP-L-rhamnose biosynthesis. It participates in bacterial outer membrane biogenesis; LPS O-antigen biosynthesis. Functionally, involved in the biosynthesis of the dTDP-L-rhamnose which is an important component of lipopolysaccharide (LPS). Catalyzes the reduction of dTDP-6-deoxy-L-lyxo-4-hexulose to yield dTDP-L-rhamnose. RmlD uses NADH and NADPH nearly equally well. The chain is dTDP-4-dehydrorhamnose reductase from Shigella flexneri.